A 155-amino-acid chain; its full sequence is U4/U6.U5 small nuclear ribonucleoprotein 27 kDa protein (155 aa).

Basic residues-rich tracts occupy residues 1 to 31 and 39 to 59; these read MGRS…RERS and RRSR…RHRS. The interval 1–97 is disordered; it reads MGRSRSRSPR…ITEEDLEGKT (97 aa). A phosphoserine mark is found at Ser-61 and Ser-65. Positions 66–97 are enriched in basic and acidic residues; the sequence is RLKERRDEEKKETKETKSKERQITEEDLEGKT. Ser-111, Ser-114, and Ser-132 each carry phosphoserine.

Belongs to the SNUT3 family. Part of a tri-snRNP complex. In terms of processing, phosphorylated in vitro by snRNP-associated protein kinase.

The protein resides in the nucleus. Its function is as follows. May play a role in mRNA splicing. In Homo sapiens (Human), this protein is U4/U6.U5 small nuclear ribonucleoprotein 27 kDa protein (SNRNP27).